A 70-amino-acid chain; its full sequence is Cytoinsectotoxin-2c (70 aa).

It belongs to the cationic peptide 06 (cytoinsectotoxin) family. In terms of tissue distribution, expressed by the venom gland.

The protein resides in the secreted. Its function is as follows. Insecticidal and antimicrobial peptide. Has insecticidal activity against larvae of flesh fly S.carnaria. Has antibacterial activity against Gram-positive bacterium B.subtilis B-501 (MIC=1.25 uM) and Gram-negative bacterium E.coli DH5alpha (MIC=2.5 uM). This chain is Cytoinsectotoxin-2c, found in Lachesana tarabaevi (Spider).